A 167-amino-acid chain; its full sequence is uncharacterized protein (167 aa).

The chain crosses the membrane as a helical span at residues 4–24; the sequence is IIGLFFIIILIVINISILAYD.

It localises to the membrane. This is an uncharacterized protein from Rickettsia prowazekii (strain Madrid E).